Here is a 595-residue protein sequence, read N- to C-terminus: L-fucose isomerase (595 aa).

Residues Glu-341 and Asp-365 each act as proton acceptor in the active site. Mn(2+) is bound by residues Glu-341, Asp-365, and His-531.

This sequence belongs to the L-fucose isomerase family. Requires Mn(2+) as cofactor.

It localises to the cytoplasm. It catalyses the reaction L-fucose = L-fuculose. Its pathway is carbohydrate degradation; L-fucose degradation; L-lactaldehyde and glycerone phosphate from L-fucose: step 1/3. In terms of biological role, converts the aldose L-fucose into the corresponding ketose L-fuculose. This chain is L-fucose isomerase, found in Clostridium perfringens (strain 13 / Type A).